Consider the following 372-residue polypeptide: Putative glutamate--cysteine ligase 2 (372 aa).

This sequence belongs to the glutamate--cysteine ligase type 2 family. YbdK subfamily.

It catalyses the reaction L-cysteine + L-glutamate + ATP = gamma-L-glutamyl-L-cysteine + ADP + phosphate + H(+). Functionally, ATP-dependent carboxylate-amine ligase which exhibits weak glutamate--cysteine ligase activity. This is Putative glutamate--cysteine ligase 2 from Rhodopirellula baltica (strain DSM 10527 / NCIMB 13988 / SH1).